The primary structure comprises 349 residues: Autophagy-related protein 3 (349 aa).

The tract at residues 95-173 (ALVNDGDDFK…IRDSGADSKN (79 aa)) is flexible region. The active-site Glycyl thioester intermediate is the Cys244. The interval 248–325 (SVMKTLLDRA…DQEVAIRVDQ (78 aa)) is handle region. Residues 306-309 (WEEV) carry the ATG8 interaction motif (AIM) motif.

It belongs to the ATG3 family. In terms of assembly, monomer. Interacts with ATG8 through an intermediate thioester bond between Cys-244 and the C-terminal Gly of ATG8. Interacts with the C-terminal region of the E1-like ATG7 enzyme. Also interacts with the ATG12-ATG5 conjugate.

The protein localises to the cytoplasm. Functionally, E2 conjugating enzyme required for the cytoplasm to vacuole transport (Cvt) and autophagy. Required for selective autophagic degradation of the nucleus (nucleophagy) as well as for mitophagy which contributes to regulate mitochondrial quantity and quality by eliminating the mitochondria to a basal level to fulfill cellular energy requirements and preventing excess ROS production. Responsible for the E2-like covalent binding of phosphatidylethanolamine to the C-terminal Gly of ATG8. The ATG12-ATG5 conjugate plays a role of an E3 and promotes the transfer of ATG8 from ATG3 to phosphatidylethanolamine (PE). This step is required for the membrane association of ATG8. The formation of the ATG8-phosphatidylethanolamine conjugate is essential for autophagy and for the cytoplasm to vacuole transport (Cvt). The ATG8-PE conjugate mediates tethering between adjacent membranes and stimulates membrane hemifusion, leading to expansion of the autophagosomal membrane during autophagy. Autophagy is required for proper vegetative growth, asexual/sexual reproduction, and full virulence. Autophagy is particularly involved in the biosynthesis of deoxynivalenol (DON), an important virulence determinant. The sequence is that of Autophagy-related protein 3 from Gibberella zeae (strain ATCC MYA-4620 / CBS 123657 / FGSC 9075 / NRRL 31084 / PH-1) (Wheat head blight fungus).